The chain runs to 231 residues: Class A basic helix-loop-helix protein 9 (231 aa).

The 53-residue stretch at 61-113 (ARRMAANVRERKRILDYNEAFNALRRALQHDLGGKRLSKIATLRRAIHRITAL) folds into the bHLH domain. A disordered region spans residues 135-168 (QAAQGSSTGNSSFSVPRSAPSPIAPSLTRRDIAS). The span at 137-149 (AQGSSTGNSSFSV) shows a compositional bias: polar residues.

Heterodimer. Efficient DNA binding requires dimerization with another bHLH protein. Interacts with TCF3, TCF4, and TCF12.

It localises to the nucleus. Functionally, transcription factor, which play a role in limb development. Is an essential player in the regulatory network governing transcription of genes implicated in limb morphogenesis. The polypeptide is Class A basic helix-loop-helix protein 9 (Bhlha9) (Mus musculus (Mouse)).